Reading from the N-terminus, the 221-residue chain is MSDSEEESQDRQLKIVVLGDGASGKTSLATCFAQETFGKRYKQTIGLDFFLRRITLPGNLNVTLQIWDIGGQTIGGKMLDKYIYGAQGVLLVYDITNYQSFENLEDWYTVVKKVSEESETRPLVALVGNKIDLEHMRTIKPEKHLRFCQENGFSSHFVSAKTGDSVFLCFQKVAAEILGIKLNKAEIEQSQRVVKADIVNYNQEPMSRTVNPPRSSMCAVQ.

Serine 2 is subject to N-acetylserine. The residue at position 8 (serine 8) is a Phosphoserine. 9 residues coordinate GTP: glycine 21, glycine 24, lysine 25, threonine 26, serine 27, glycine 38, lysine 39, tyrosine 41, and threonine 44. Threonine 26 provides a ligand contact to Mg(2+). The switch I stretch occupies residues 35-49; it reads ETFGKRYKQTIGLDF. Mg(2+)-binding residues include threonine 44 and aspartate 68. The segment at 68–85 is switch II; sequence DIGGQTIGGKMLDKYIYG. Positions 71, 129, 130, 132, 160, and 161 each coordinate GTP. At cysteine 218 the chain carries Cysteine methyl ester. The S-farnesyl cysteine moiety is linked to residue cysteine 218. Positions 219–221 are cleaved as a propeptide — removed in mature form; that stretch reads AVQ.

The protein belongs to the small GTPase superfamily. Rab family. As to quaternary structure, interacts (prenylated form) with PDE6D; the interaction promotes RAB28 delivery to the photoreceptor outer segments. Interacts with KCNJ13; the interaction may facilitate cone outer segments phagocytosis. Also participates in nuclear factor kappa-B p65/RELA nuclear transport in endothelial cells. It depends on Mg(2+) as a cofactor. Isoprenylated.

It is found in the cell membrane. Its subcellular location is the cytoplasm. It localises to the cytoskeleton. The protein localises to the cilium basal body. The protein resides in the nucleus. The enzyme catalyses GTP + H2O = GDP + phosphate + H(+). With respect to regulation, regulated by guanine nucleotide exchange factors (GEFs) which promote the exchange of bound GDP for free GTP. Regulated by GTPase activating proteins (GAPs) which increase the GTP hydrolysis activity. Inhibited by GDP dissociation inhibitors (GDIs). Its function is as follows. The small GTPases Rab are key regulators of intracellular membrane trafficking, from the formation of transport vesicles to their fusion with membranes. Rabs cycle between an inactive GDP-bound form and an active GTP-bound form that is able to recruit to membranes different sets of downstream effectors directly responsible for vesicle formation, movement, tethering and fusion. RAB28 is required for shedding and phagocytosis of cone cell outer segments (OS) discs in the retina. Also participates in nuclear factor kappa-B p65/RELA nuclear transport in endothelial cells. The sequence is that of Ras-related protein Rab-28 (RAB28) from Pongo abelii (Sumatran orangutan).